A 123-amino-acid polypeptide reads, in one-letter code: Small ribosomal subunit protein uS12 (123 aa).

Asp89 is subject to 3-methylthioaspartic acid. The disordered stretch occupies residues 101–123 (SLDTAGVKDRKQSRSKYGAKRPK). The segment covering 113-123 (SRSKYGAKRPK) has biased composition (basic residues).

This sequence belongs to the universal ribosomal protein uS12 family. As to quaternary structure, part of the 30S ribosomal subunit. Contacts proteins S8 and S17. May interact with IF1 in the 30S initiation complex.

Its function is as follows. With S4 and S5 plays an important role in translational accuracy. In terms of biological role, interacts with and stabilizes bases of the 16S rRNA that are involved in tRNA selection in the A site and with the mRNA backbone. Located at the interface of the 30S and 50S subunits, it traverses the body of the 30S subunit contacting proteins on the other side and probably holding the rRNA structure together. The combined cluster of proteins S8, S12 and S17 appears to hold together the shoulder and platform of the 30S subunit. This chain is Small ribosomal subunit protein uS12, found in Laribacter hongkongensis (strain HLHK9).